A 279-amino-acid polypeptide reads, in one-letter code: MEAVVNLYQEVMKHADPRIQGYPLMGSPLLMTSILLTYVYFVLSLGPRIMANRKPFQLRGFMIVYNFSLVALSLYIVYEFLMSGWLSTYTWRCDPVDYSNSPEALRMVRVAWLFLFSKFIELMDTVIFILRKKDGQVTFLHVFHHSVLPWSWWWGVKIAPGGMGSFHAMINSSVHVIMYLYYGLSAFGPVAQPYLWWKKHMTAIQLIQFVLVSLHISQYYFMSSCNYQYPVIIHLIWMYGTIFFMLFSNFWYHSYTKGKRLPRALQQNGAPGIAKVKAN.

M1 is subject to N-acetylmethionine. The next 7 helical transmembrane spans lie at 23–43 (PLMG…YFVL), 61–81 (FMIV…YEFL), 110–130 (VAWL…IFIL), 137–154 (VTFL…SWWW), 176–196 (VIMY…PYLW), 201–221 (MTAI…QYYF), and 231–251 (VIIH…SNFW). The Di-lysine motif motif lies at 275–279 (KVKAN).

The protein belongs to the ELO family. ELOVL1 subfamily. Interacts with LASS2 and HSD17B12. Interacts with TECR. As to expression, ubiquitous.

Its subcellular location is the endoplasmic reticulum membrane. It catalyses the reaction a very-long-chain acyl-CoA + malonyl-CoA + H(+) = a very-long-chain 3-oxoacyl-CoA + CO2 + CoA. The catalysed reaction is eicosanoyl-CoA + malonyl-CoA + H(+) = 3-oxodocosanoyl-CoA + CO2 + CoA. It carries out the reaction (11Z)-eicosenoyl-CoA + malonyl-CoA + H(+) = 3-oxo-(13Z)-docosenoyl-CoA + CO2 + CoA. The enzyme catalyses docosanoyl-CoA + malonyl-CoA + H(+) = 3-oxotetracosanoyl-CoA + CO2 + CoA. It catalyses the reaction (13Z)-docosenoyl-CoA + malonyl-CoA + H(+) = 3-oxo-(15Z)-tetracosenoyl-CoA + CO2 + CoA. The catalysed reaction is tetracosanoyl-CoA + malonyl-CoA + H(+) = 3-oxohexacosanoyl-CoA + CO2 + CoA. It carries out the reaction hexacosanoyl-CoA + malonyl-CoA + H(+) = 3-oxooctacosanyol-CoA + CO2 + CoA. The enzyme catalyses octadecanoyl-CoA + malonyl-CoA + H(+) = 3-oxoeicosanoyl-CoA + CO2 + CoA. The protein operates within lipid metabolism; fatty acid biosynthesis. Functionally, catalyzes the first and rate-limiting reaction of the four reactions that constitute the long-chain fatty acids elongation cycle. This endoplasmic reticulum-bound enzymatic process allows the addition of 2 carbons to the chain of long- and very long-chain fatty acids (VLCFAs) per cycle. Condensing enzyme that exhibits activity toward saturated and monounsaturated acyl-CoA substrates, with the highest activity towards C22:0 acyl-CoA. May participate in the production of both saturated and monounsaturated VLCFAs of different chain lengths that are involved in multiple biological processes as precursors of membrane lipids and lipid mediators. Important for saturated C24:0 and monounsaturated C24:1 sphingolipid synthesis. Indirectly inhibits RPE65 via production of VLCFAs. The polypeptide is Very long chain fatty acid elongase 1 (Homo sapiens (Human)).